A 240-amino-acid chain; its full sequence is uncharacterized protein (240 aa).

The N-terminal stretch at 1–17 (MRMAFMLLALLFSFRNA) is a signal peptide.

This is an uncharacterized protein from Treponema pallidum (strain Nichols).